The primary structure comprises 392 residues: Norsolorinic acid reductase B (392 aa).

Residue aspartate 75 participates in NADP(+) binding. Tyrosine 80 functions as the Proton donor in the catalytic mechanism. NADP(+)-binding positions include serine 184–aspartate 185, glutamine 210, glycine 239–glutamate 249, and arginine 311–asparagine 319. A disordered region spans residues glycine 242–lysine 263. Over residues glutamate 249–glycine 261 the composition is skewed to basic and acidic residues.

It belongs to the aldo/keto reductase family. Aldo/keto reductase 2 subfamily.

The protein operates within mycotoxin biosynthesis. Norsolorinic acid reductase; part of the fragmented gene cluster that mediates the biosynthesis of dothistromin (DOTH), a polyketide toxin very similar in structure to the aflatoxin precursor, versicolorin B. The first step of the pathway is the conversion of acetate to norsolorinic acid (NOR) and requires the fatty acid synthase subunits hexA and hexB, as well as the polyketide synthase pksA. PksA combines a hexanoyl starter unit and 7 malonyl-CoA extender units to synthesize the precursor NOR. The hexanoyl starter unit is provided to the acyl-carrier protein (ACP) domain by the fungal fatty acid synthase hexA/hexB. The second step is the conversion of NOR to averantin (AVN) and requires the norsolorinic acid ketoreductase nor1, which catalyzes the dehydration of norsolorinic acid to form (1'S)-averantin. The cytochrome P450 monooxygenase avnA then catalyzes the hydroxylation of AVN to 5'hydroxyaverantin (HAVN). The next step is performed by adhA that transforms HAVN to averufin (AVF). Averufin might then be converted to hydroxyversicolorone by cypX and avfA. Hydroxyversicolorone is further converted versiconal hemiacetal acetate (VHA) by moxY. VHA is then the substrate for the versiconal hemiacetal acetate esterase est1 to yield versiconal (VAL). Versicolorin B synthase vbsA then converts VAL to versicolorin B (VERB) by closing the bisfuran ring. Then, the activity of the versicolorin B desaturase verB leads to versicolorin A (VERA). DotB, a predicted chloroperoxidase, may perform epoxidation of the A-ring of VERA. Alternatively, a cytochrome P450, such as cypX or avnA could catalyze this step. It is also possible that another, uncharacterized, cytochrome P450 enzyme is responsible for this step. Opening of the epoxide could potentially be achieved by the epoxide hydrolase epoA. However, epoA seems not to be required for DOTH biosynthesis, but other epoxide hydrolases may have the ability to complement this hydrolysis. Alternatively, opening of the epoxide ring could be achieved non-enzymatically. The next step is the deoxygenation of ring A to yield the 5,8-dihydroxyanthraquinone which is most likely catalyzed by the NADPH dehydrogenase encoded by ver1. The last stages of DOTH biosynthesis are proposed to involve hydroxylation of the bisfuran. OrdB and norB might have oxidative roles here. An alternative possibility is that cytochrome P450 monoogenases such as avnA and cypX might perform these steps in addition to previously proposed steps. The polypeptide is Norsolorinic acid reductase B (Dothistroma septosporum (strain NZE10 / CBS 128990) (Red band needle blight fungus)).